The following is a 209-amino-acid chain: Large ribosomal subunit protein uL3 (209 aa).

Gln-150 bears the N5-methylglutamine mark.

It belongs to the universal ribosomal protein uL3 family. Part of the 50S ribosomal subunit. Forms a cluster with proteins L14 and L19. In terms of processing, methylated by PrmB.

One of the primary rRNA binding proteins, it binds directly near the 3'-end of the 23S rRNA, where it nucleates assembly of the 50S subunit. This Buchnera aphidicola subsp. Schizaphis graminum (strain Sg) protein is Large ribosomal subunit protein uL3.